The primary structure comprises 692 residues: Epithelial sodium channel subunit alpha (692 aa).

The interval 1–67 (MSSIKGNKLE…PAAPQQPTAE (67 aa)) is disordered. The Cytoplasmic segment spans residues 1–108 (MSSIKGNKLE…CSQHNRMKTA (108 aa)). Low complexity predominate over residues 56-65 (PEPAAPQQPT). Residues 109–129 (FWAVLWLCTFGMMYWQFGLLF) traverse the membrane as a helical segment. Over 130–585 (GEYFSYPVSL…SQWSLWFGSS (456 aa)) the chain is Extracellular. 10 disulfide bridges follow: cysteine 156/cysteine 328, cysteine 252/cysteine 259, cysteine 305/cysteine 312, cysteine 417/cysteine 502, cysteine 439/cysteine 479, cysteine 439/cysteine 498, cysteine 443/cysteine 494, cysteine 452/cysteine 479, cysteine 452/cysteine 502, and cysteine 454/cysteine 468. The gating release of inhibition by proteolysis (GRIP); protease-sensitive region that is responsible for the proteolytic activation of the channel stretch occupies residues 198 to 266 (RSRRDLRGTL…SDCFYQTYSS (69 aa)). The chain crosses the membrane as a helical span at residues 586–606 (VLSVVEMAELIFDLLVITFLM). Topologically, residues 607-692 (LLRRFRSRYW…GSSACPLGGP (86 aa)) are cytoplasmic. The tract at residues 627-692 (EVASTLASSP…GSSACPLGGP (66 aa)) is disordered. The span at 628 to 637 (VASTLASSPP) shows a compositional bias: polar residues. Pro residues predominate over residues 653 to 666 (GPAPSPALTAPPPA). The PY motif; recruits WW domain-containing proteins and is thereby required for ubiquitination and inhibition of the channel by NEDD4 and NEDD4L signature appears at 663-667 (PPPAY). The span at 682 to 692 (AGSSACPLGGP) shows a compositional bias: low complexity.

This sequence belongs to the amiloride-sensitive sodium channel (TC 1.A.6) family. SCNN1A subfamily. As to quaternary structure, heterotrimer; containing an alpha/SCNN1A, a beta/SCNN1B and a gamma/SCNN1G subunit. Interacts with WWP1 (via WW domains). Interacts with WWP2 (via WW domains); inhibits the channel. Interacts with BPIFA1; the interaction is indirect via SCNN1B and inhibits the proteolytic processing of SCNN1A and SCNN1G and the activation of ENaC. Interacts with the full-length immature form of PCSK9 (pro-PCSK9). Ubiquitinated. Can be ubiquitinated at multiple sites and undergo monoubiquitination and polyubiquitination. Ubiquitination by NEDD4 or NEDD4L inhibits the ENaC channel through endocytosis, intracellular retention and degradation of its individual subunits. Post-translationally, N-glycosylated. In terms of processing, ENaC is activated through the proteolytic maturation of its subunits. Furin cleaves the SCNN1A subunit, which results in a stepwise increase in the open probability of the channel due to the release of an inhibitory tract. BPIFA1, which is recruited by the SCNN1B subunit, prevents the proteolytic activation of ENaC.

The protein localises to the apical cell membrane. Its subcellular location is the cell projection. It is found in the cilium. It localises to the cytoplasmic granule. The protein resides in the cytoplasm. The protein localises to the cytoplasmic vesicle. Its subcellular location is the secretory vesicle. It is found in the acrosome. It localises to the flagellum. The enzyme catalyses Na(+)(in) = Na(+)(out). With respect to regulation, originally identified and characterized by its inhibition by the diuretic drug amiloride. Its function is as follows. This is one of the three pore-forming subunits of the heterotrimeric epithelial sodium channel (ENaC), a critical regulator of sodium balance and fluid homeostasis. ENaC operates in epithelial tissues, where it mediates the electrodiffusion of sodium ions from extracellular fluid through the apical membrane of cells, with water following osmotically. It plays a key role in maintaining sodium homeostasis through electrogenic sodium reabsorption in the kidneys. Additionally, ENaC is essential for airway surface liquid homeostasis, which is crucial for proper mucus clearance. The polypeptide is Epithelial sodium channel subunit alpha (Pan troglodytes (Chimpanzee)).